A 194-amino-acid chain; its full sequence is Peptidyl-tRNA hydrolase (194 aa).

Tyr17 contributes to the tRNA binding site. The active-site Proton acceptor is His22. Positions 68, 70, and 116 each coordinate tRNA.

The protein belongs to the PTH family. As to quaternary structure, monomer.

It localises to the cytoplasm. The catalysed reaction is an N-acyl-L-alpha-aminoacyl-tRNA + H2O = an N-acyl-L-amino acid + a tRNA + H(+). Functionally, hydrolyzes ribosome-free peptidyl-tRNAs (with 1 or more amino acids incorporated), which drop off the ribosome during protein synthesis, or as a result of ribosome stalling. Catalyzes the release of premature peptidyl moieties from peptidyl-tRNA molecules trapped in stalled 50S ribosomal subunits, and thus maintains levels of free tRNAs and 50S ribosomes. The protein is Peptidyl-tRNA hydrolase of Haemophilus influenzae (strain ATCC 51907 / DSM 11121 / KW20 / Rd).